A 519-amino-acid polypeptide reads, in one-letter code: Na(+)/H(+) exchange regulatory cofactor NHE-RF3 (519 aa).

In terms of domain architecture, PDZ 1 spans 9-90; sequence ECKLSKQEGQ…SVTLLVLDGD (82 aa). Ser108, Ser148, Ser192, Ser250, Ser334, and Ser348 each carry phosphoserine. 2 consecutive PDZ domains span residues 128–215 and 243–323; these read EPCA…VDKE and VVVI…LDKE. Residues 348 to 374 form a disordered region; sequence SVKEGPAPIPAPLEATGSEPTEDAEGH. The PDZ 4 domain occupies 378–458; sequence LCRLLKEDDS…HVTLLVCGKM (81 aa). Residues Thr451 and Thr488 each carry the phosphothreonine modification. A disordered region spans residues 479 to 519; sequence VAGPDEKGETSAESEHDAHPAKDRTLSTASHSSSNSEDTEM. A compositionally biased stretch (basic and acidic residues) spans 482–503; that stretch reads PDEKGETSAESEHDAHPAKDRT. Residues Ser489 and Ser492 each carry the phosphoserine modification. Thr503 bears the Phosphothreonine mark. Low complexity predominate over residues 505–519; the sequence is STASHSSSNSEDTEM. A phosphoserine mark is found at Ser508, Ser510, Ser511, Ser512, and Ser514.

Belongs to the NHER family. In terms of assembly, interacts with PDZK1IP1 and ABCC2. Binds to the C-terminal region of SLC26A3. Interacts (via C-terminal PDZ domain) with SLC26A6 (via C-terminal domain). Interacts (via C-terminal PDZ domain) with SLC9A3 (via C-terminal domain). Component of a complex, composed of PDZK1, SYNGAP1, KLHL17 and NMDA receptors. Interacts (via PDZ1 domain) directly with KLHL17; the interaction is important for integrity of actin cytoskeleton structures in neurons. Forms a heterodimeric complex with NHERF1. Interacts with AKAP2, BCR, CFTR, SLCO1A1, SLC22A12, SLC22A4, SLC22A5, SLC26A6, NHERF2 and SLC17A1. Interacts (via the first PDZ domain) with PTGIR (via non-isoprenylated C-terminus). Interacts (via PDZ domains 1 and 3) with SCARB1 (C-terminal domain). Interacts (via PDZ domains 1 and 3) with SLC5A8 (via PDZ-binding motif); interaction increases nicotinate transport activity of SLC5A8. Expressed in kidney, liver, small intestine. brain, lung, and testis (at protein level).

It is found in the membrane. The protein resides in the cell membrane. Functionally, a scaffold protein that connects plasma membrane proteins and regulatory components, regulating their surface expression in epithelial cells apical domains. May be involved in the coordination of a diverse range of regulatory processes for ion transport and second messenger cascades. In complex with NHERF1, may cluster proteins that are functionally dependent in a mutual fashion and modulate the trafficking and the activity of the associated membrane proteins. May play a role in the cellular mechanisms associated with multidrug resistance through its interaction with ABCC2 and PDZK1IP1. May potentiate the CFTR chloride channel activity. Required for normal cell-surface expression of SCARB1. Plays a role in maintaining normal plasma cholesterol levels via its effects on SCARB1. Plays a role in the normal localization and function of the chloride-anion exchanger SLC26A6 to the plasma membrane in the brush border of the proximal tubule of the kidney. May be involved in the regulation of proximal tubular Na(+)-dependent inorganic phosphate cotransport therefore playing an important role in tubule function. The protein is Na(+)/H(+) exchange regulatory cofactor NHE-RF3 (Pdzk1) of Mus musculus (Mouse).